The following is a 447-amino-acid chain: Adenylosuccinate synthetase (447 aa).

GTP-binding positions include 35–41 and 63–65; these read GDEGKGK and GHT. The Proton acceptor role is filled by D36. Residues D36 and G63 each coordinate Mg(2+). Residues 36–39, 61–64, T153, R167, N245, T260, and R324 contribute to the IMP site; these read DEGK and NAGH. H64 functions as the Proton donor in the catalytic mechanism. Substrate is bound at residue 320–326; it reads VTTKRKR. GTP is bound by residues R326, 352–354, and 435–437; these read KLD and GVG.

It belongs to the adenylosuccinate synthetase family. As to quaternary structure, homodimer. It depends on Mg(2+) as a cofactor.

The protein localises to the cytoplasm. It carries out the reaction IMP + L-aspartate + GTP = N(6)-(1,2-dicarboxyethyl)-AMP + GDP + phosphate + 2 H(+). It participates in purine metabolism; AMP biosynthesis via de novo pathway; AMP from IMP: step 1/2. Plays an important role in the de novo pathway and in the salvage pathway of purine nucleotide biosynthesis. Catalyzes the first committed step in the biosynthesis of AMP from IMP. Plays a role in the regulation of adult life span. In Drosophila melanogaster (Fruit fly), this protein is Adenylosuccinate synthetase.